We begin with the raw amino-acid sequence, 1186 residues long: Atrophin-1 (1186 aa).

3 disordered regions span residues 1–604 (MKTR…PTVT), 618–763 (ASSP…ARFN), and 781–858 (VPLE…HRPP). The short motif at 16-32 (RKKEAPGPREELRSRGR) is the Nuclear localization signal element. The span at 17-29 (KKEAPGPREELRS) shows a compositional bias: basic and acidic residues. S34 carries the phosphoserine modification. The span at 45–63 (GKAEKSRQTAKKARVEEAS) shows a compositional bias: basic and acidic residues. 5 positions are modified to phosphoserine: S77, S79, S100, S102, and S106. Residues 107–127 (LDGRSLNDDGSSDPRDIDQDN) show a composition bias toward basic and acidic residues. Residues 128–151 (RSTSPSIYSPGSVENDSDSSSGLS) show a composition bias toward polar residues. Residues 157–173 (PYHPPPLFPPSPQPPDS) are compositionally biased toward pro residues. Composition is skewed to low complexity over residues 258–270 (PISV…SGAP), 349–365 (PTLA…SSSA), and 375–396 (SSSS…SSAS). Positions 416 to 437 (SLSVSNQPPKYTQPSLPSQAVW) are enriched in polar residues. The span at 484-503 (QQQQQQQQQQQQQQQHHGNS) shows a compositional bias: low complexity. Residues 513-563 (HPLEGGSSHHAHPYAMSPSLGSLRPYPPGPAHLPPPHSQVSYSQAGPNGPP) form an involved in binding BAIAP2 region. Residues 537 to 549 (PYPPGPAHLPPPH) are compositionally biased toward pro residues. Composition is skewed to low complexity over residues 565–582 (SSSS…YPCS) and 618–628 (ASSPAGYKTAS). S628 is modified (phosphoserine). At K637 the chain carries N6-acetyllysine. T649 bears the Phosphothreonine mark. S657 carries the post-translational modification Phosphoserine. The residue at position 665 (T665) is a Phosphothreonine. Pro residues-rich tracts occupy residues 689–714 (GPGP…PASG) and 735–748 (SPVP…PPPK). A Phosphoserine; by MAPK8 modification is found at S735. Phosphoserine occurs at positions 742 and 744. The segment covering 791–835 (KRADLVEKVRREAEQRAREEKEREREREREKEREREKERELERSV) has biased composition (basic and acidic residues). The tract at residues 875–890 (DTPALRTLSEYARPHV) is required for interaction with FAT1. S892 bears the Phosphoserine mark. The Nuclear export signal motif lies at 1029–1037 (ALGNDPLAR). An Asymmetric dimethylarginine modification is found at R1111. A Glycyl lysine isopeptide (Lys-Gly) (interchain with G-Cter in SUMO2) cross-link involves residue K1179.

Interacts with NR2E1; the interaction represses the transcriptional activity of NR2E1. Interacts with BAIAP2, WWP1, WWP2, WWP3 and RERE. Interacts (via its N-terminus) with MTG8; the interaction enhances transcriptional repression of MTG8. Interacts with FAT1 (via a C-terminal domain). Interacts with PQBP1. Phosphorylated in vitro by MAPK8/JNK1 on Ser-735.

It localises to the nucleus. It is found in the cytoplasm. Its subcellular location is the perinuclear region. The protein resides in the cell junction. In terms of biological role, transcriptional corepressor. Corepressor of MTG8 transcriptional repression. Recruits NR2E1 to repress transcription. Has some intrinsic repression activity. Promotes vascular smooth cell (VSMC) migration and orientation. The protein is Atrophin-1 (ATN1) of Pan troglodytes (Chimpanzee).